A 102-amino-acid polypeptide reads, in one-letter code: Hypersensitivity to hygromycin-B protein 1 (102 aa).

Positions 1 to 17 (MSLSFLLFSPFLPPCFS) are cleaved as a signal peptide. The chain crosses the membrane as a helical span at residues 18-38 (SISICLSVLSTVSFFFAFTIP). Over 39 to 69 (HYVLRCGSVDEWHIHSSAEDFRTQRCVCAVK) the chain is Cytoplasmic. A helical transmembrane segment spans residues 70-90 (LSASLLGCLLACASWSLLLEV). Topologically, residues 91 to 102 (SRIKWHVGTAYS) are extracellular.

Its subcellular location is the membrane. Functionally, involved in vacuolar trafficking. The protein is Hypersensitivity to hygromycin-B protein 1 of Saccharomyces cerevisiae (strain ATCC 204508 / S288c) (Baker's yeast).